Consider the following 205-residue polypeptide: Glycerol-3-phosphate acyltransferase (205 aa).

Topologically, residues 1–3 are periplasmic; it reads MSA. A helical membrane pass occupies residues 4–24; it reads IAPGMILIAYLCGSISSAILV. The Cytoplasmic portion of the chain corresponds to 25–52; it reads CRLCGLPDPRTSGSGNPGATNVLRIGGK. A helical membrane pass occupies residues 53–73; it reads GAAVAVLIFDVLKGMLPVWGA. At 74-80 the chain is on the periplasmic side; it reads YELGVSP. The chain crosses the membrane as a helical span at residues 81 to 101; the sequence is FWLGLIAIAACLGHIWPVFFG. Residues 102–111 are Cytoplasmic-facing; that stretch reads FKGGKGVATA. Residues 112 to 132 form a helical membrane-spanning segment; the sequence is FGAIAPISWDLTGVMAGTWLL. The Periplasmic segment spans residues 133–137; the sequence is TVLLS. A helical transmembrane segment spans residues 138-158; the sequence is GYSSLGAIVSALIAPFYVWWF. The Cytoplasmic portion of the chain corresponds to 159 to 205; sequence KPQFTFPVSMLSCLILLRHHDNIQRLWRRQETKIWTKFKRKREKDPE.

The protein belongs to the PlsY family. As to quaternary structure, probably interacts with PlsX.

Its subcellular location is the cell inner membrane. The enzyme catalyses sn-glycerol 3-phosphate + an acyl-CoA = a 1-acyl-sn-glycero-3-phosphate + CoA. It catalyses the reaction a fatty acyl-[ACP] + sn-glycerol 3-phosphate = a 1-acyl-sn-glycero-3-phosphate + holo-[ACP]. It functions in the pathway lipid metabolism; phospholipid metabolism. Functionally, catalyzes the transfer of an acyl group from acyl-ACP to glycerol-3-phosphate (G3P) to form lysophosphatidic acid (LPA). This enzyme can also utilize acyl-CoA as fatty acyl donor, but not acyl-PO(4). This chain is Glycerol-3-phosphate acyltransferase, found in Shigella flexneri serotype 5b (strain 8401).